Consider the following 146-residue polypeptide: Prolactin-inducible protein (146 aa).

The first 28 residues, 1–28 (MRLLQLLFRASPATLLLVLCLQLGANKA), serve as a signal peptide directing secretion. The residue at position 29 (Gln-29) is a Pyrrolidone carboxylic acid. 2 disulfides stabilise this stretch: Cys-65–Cys-91 and Cys-89–Cys-123. A glycan (N-linked (GlcNAc...) asparagine) is linked at Asn-105.

This sequence belongs to the PIP family. As to quaternary structure, monomer. Interacts with AZGP1. Expressed in pathological conditions of the mammary gland and in several exocrine tissues, such as the lacrimal, salivary, and sweat glands.

It localises to the secreted. The protein is Prolactin-inducible protein (PIP) of Homo sapiens (Human).